Here is a 526-residue protein sequence, read N- to C-terminus: Bifunctional purine biosynthesis protein PurH (526 aa).

One can recognise an MGS-like domain in the interval 1–148; it reads MSLNNIIKNA…KNYKDVIVIV (148 aa).

The protein belongs to the PurH family.

It catalyses the reaction (6R)-10-formyltetrahydrofolate + 5-amino-1-(5-phospho-beta-D-ribosyl)imidazole-4-carboxamide = 5-formamido-1-(5-phospho-D-ribosyl)imidazole-4-carboxamide + (6S)-5,6,7,8-tetrahydrofolate. The catalysed reaction is IMP + H2O = 5-formamido-1-(5-phospho-D-ribosyl)imidazole-4-carboxamide. Its pathway is purine metabolism; IMP biosynthesis via de novo pathway; 5-formamido-1-(5-phospho-D-ribosyl)imidazole-4-carboxamide from 5-amino-1-(5-phospho-D-ribosyl)imidazole-4-carboxamide (10-formyl THF route): step 1/1. It participates in purine metabolism; IMP biosynthesis via de novo pathway; IMP from 5-formamido-1-(5-phospho-D-ribosyl)imidazole-4-carboxamide: step 1/1. In Buchnera aphidicola subsp. Schizaphis graminum (strain Sg), this protein is Bifunctional purine biosynthesis protein PurH.